Reading from the N-terminus, the 165-residue chain is Type VI lipase immunity protein Tli3 (165 aa).

The signal sequence occupies residues 1–21 (MKCKTLLIACLFGLGSAQALA).

Interacts with the Tle3 toxin.

It is found in the periplasm. Immunity protein that neutralizes the toxicity of the P.aeruginosa antibacterial toxin Tle3 in the periplasm to protect the cell from fratricide intoxication. The protein is Type VI lipase immunity protein Tli3 of Pseudomonas aeruginosa (strain ATCC 15692 / DSM 22644 / CIP 104116 / JCM 14847 / LMG 12228 / 1C / PRS 101 / PAO1).